The primary structure comprises 228 residues: Ankyrin repeat domain-containing protein 46 (228 aa).

4 ANK repeats span residues glutamine 11–isoleucine 40, arginine 44–alanine 73, glutamine 77–isoleucine 103, and glutamine 107–glycine 138. The chain crosses the membrane as a helical span at residues valine 195 to glycine 215.

It localises to the membrane. In Pongo abelii (Sumatran orangutan), this protein is Ankyrin repeat domain-containing protein 46 (ANKRD46).